The following is a 416-amino-acid chain: 4-hydroxy-3-methylbut-2-en-1-yl diphosphate synthase (flavodoxin) (416 aa).

Residues C304, C307, C350, and E357 each coordinate [4Fe-4S] cluster.

Belongs to the IspG family. Requires [4Fe-4S] cluster as cofactor.

It catalyses the reaction (2E)-4-hydroxy-3-methylbut-2-enyl diphosphate + oxidized [flavodoxin] + H2O + 2 H(+) = 2-C-methyl-D-erythritol 2,4-cyclic diphosphate + reduced [flavodoxin]. The protein operates within isoprenoid biosynthesis; isopentenyl diphosphate biosynthesis via DXP pathway; isopentenyl diphosphate from 1-deoxy-D-xylulose 5-phosphate: step 5/6. In terms of biological role, converts 2C-methyl-D-erythritol 2,4-cyclodiphosphate (ME-2,4cPP) into 1-hydroxy-2-methyl-2-(E)-butenyl 4-diphosphate. In Burkholderia pseudomallei (strain K96243), this protein is 4-hydroxy-3-methylbut-2-en-1-yl diphosphate synthase (flavodoxin).